We begin with the raw amino-acid sequence, 220 residues long: Probable GTP-binding protein EngB (220 aa).

An EngB-type G domain is found at 31–205 (AGVEIAFAGR…LGILNEWCHP (175 aa)). GTP is bound by residues 39–46 (GRSNAGKS), 66–70 (GRTQL), 84–87 (DLPG), 151–154 (TKAD), and 184–186 (FSS). 2 residues coordinate Mg(2+): serine 46 and threonine 68.

Belongs to the TRAFAC class TrmE-Era-EngA-EngB-Septin-like GTPase superfamily. EngB GTPase family. It depends on Mg(2+) as a cofactor.

In terms of biological role, necessary for normal cell division and for the maintenance of normal septation. This chain is Probable GTP-binding protein EngB, found in Shewanella sediminis (strain HAW-EB3).